Here is a 549-residue protein sequence, read N- to C-terminus: Oxygen-dependent choline dehydrogenase (549 aa).

4 to 33 (DFVIIGSGSAGSALAYRLSEDGKNSVLVIE) lines the FAD pocket. The active-site Proton acceptor is His465. Residues 530–549 (PLARSNQEPWINPRAAVSDR) are disordered.

It belongs to the GMC oxidoreductase family. The cofactor is FAD.

The enzyme catalyses choline + A = betaine aldehyde + AH2. It carries out the reaction betaine aldehyde + NAD(+) + H2O = glycine betaine + NADH + 2 H(+). The protein operates within amine and polyamine biosynthesis; betaine biosynthesis via choline pathway; betaine aldehyde from choline (cytochrome c reductase route): step 1/1. Its function is as follows. Involved in the biosynthesis of the osmoprotectant glycine betaine. Catalyzes the oxidation of choline to betaine aldehyde and betaine aldehyde to glycine betaine at the same rate. In Rhizobium etli (strain ATCC 51251 / DSM 11541 / JCM 21823 / NBRC 15573 / CFN 42), this protein is Oxygen-dependent choline dehydrogenase.